A 270-amino-acid chain; its full sequence is Formamidopyrimidine-DNA glycosylase (270 aa).

Residue Pro-2 is the Schiff-base intermediate with DNA of the active site. Glu-3 serves as the catalytic Proton donor. Residue Lys-58 is the Proton donor; for beta-elimination activity of the active site. Residues His-90 and Arg-109 each contribute to the DNA site. The FPG-type zinc-finger motif lies at Lys-237–Lys-270. Arg-260 functions as the Proton donor; for delta-elimination activity in the catalytic mechanism.

The protein belongs to the FPG family. In terms of assembly, monomer. It depends on Zn(2+) as a cofactor.

It catalyses the reaction Hydrolysis of DNA containing ring-opened 7-methylguanine residues, releasing 2,6-diamino-4-hydroxy-5-(N-methyl)formamidopyrimidine.. The enzyme catalyses 2'-deoxyribonucleotide-(2'-deoxyribose 5'-phosphate)-2'-deoxyribonucleotide-DNA = a 3'-end 2'-deoxyribonucleotide-(2,3-dehydro-2,3-deoxyribose 5'-phosphate)-DNA + a 5'-end 5'-phospho-2'-deoxyribonucleoside-DNA + H(+). In terms of biological role, involved in base excision repair of DNA damaged by oxidation or by mutagenic agents. Acts as a DNA glycosylase that recognizes and removes damaged bases. Has a preference for oxidized purines, such as 7,8-dihydro-8-oxoguanine (8-oxoG). Has AP (apurinic/apyrimidinic) lyase activity and introduces nicks in the DNA strand. Cleaves the DNA backbone by beta-delta elimination to generate a single-strand break at the site of the removed base with both 3'- and 5'-phosphates. In Zymomonas mobilis subsp. mobilis (strain ATCC 31821 / ZM4 / CP4), this protein is Formamidopyrimidine-DNA glycosylase (mutM).